The sequence spans 474 residues: ATP synthase subunit beta (474 aa).

An ATP-binding site is contributed by 152-159 (GGAGVGKT).

It belongs to the ATPase alpha/beta chains family. In terms of assembly, F-type ATPases have 2 components, CF(1) - the catalytic core - and CF(0) - the membrane proton channel. CF(1) has five subunits: alpha(3), beta(3), gamma(1), delta(1), epsilon(1). CF(0) has three main subunits: a(1), b(2) and c(9-12). The alpha and beta chains form an alternating ring which encloses part of the gamma chain. CF(1) is attached to CF(0) by a central stalk formed by the gamma and epsilon chains, while a peripheral stalk is formed by the delta and b chains.

It is found in the cell inner membrane. It catalyses the reaction ATP + H2O + 4 H(+)(in) = ADP + phosphate + 5 H(+)(out). Produces ATP from ADP in the presence of a proton gradient across the membrane. The catalytic sites are hosted primarily by the beta subunits. The polypeptide is ATP synthase subunit beta (Paramagnetospirillum magneticum (strain ATCC 700264 / AMB-1) (Magnetospirillum magneticum)).